Consider the following 400-residue polypeptide: Acetyl-CoA decarbonylase/synthase complex subunit delta (400 aa).

This sequence belongs to the CdhD family. Heterodimer of delta and gamma chains. The ACDS complex is made up of alpha, epsilon, beta, gamma and delta chains with a probable stoichiometry of (alpha(2)epsilon(2))(4)-beta(8)-(gamma(1)delta(1))(8).

Part of a complex that catalyzes the reversible cleavage of acetyl-CoA, allowing autotrophic growth from CO(2). Probably maintains the overall quaternary structure of the ACDS complex. The chain is Acetyl-CoA decarbonylase/synthase complex subunit delta from Methanopyrus kandleri (strain AV19 / DSM 6324 / JCM 9639 / NBRC 100938).